A 20-amino-acid chain; its full sequence is Cytochrome c oxidase subunit 8B, mitochondrial (20 aa).

It belongs to the cytochrome c oxidase VIII family. Component of the cytochrome c oxidase (complex IV, CIV), a multisubunit enzyme composed of 14 subunits. The complex is composed of a catalytic core of 3 subunits MT-CO1, MT-CO2 and MT-CO3, encoded in the mitochondrial DNA, and 11 supernumerary subunits COX4I, COX5A, COX5B, COX6A, COX6B, COX6C, COX7A, COX7B, COX7C, COX8 and NDUFA4, which are encoded in the nuclear genome. The complex exists as a monomer or a dimer and forms supercomplexes (SCs) in the inner mitochondrial membrane with NADH-ubiquinone oxidoreductase (complex I, CI) and ubiquinol-cytochrome c oxidoreductase (cytochrome b-c1 complex, complex III, CIII), resulting in different assemblies (supercomplex SCI(1)III(2)IV(1) and megacomplex MCI(2)III(2)IV(2)).

It localises to the mitochondrion inner membrane. It functions in the pathway energy metabolism; oxidative phosphorylation. Its function is as follows. Component of the cytochrome c oxidase, the last enzyme in the mitochondrial electron transport chain which drives oxidative phosphorylation. The respiratory chain contains 3 multisubunit complexes succinate dehydrogenase (complex II, CII), ubiquinol-cytochrome c oxidoreductase (cytochrome b-c1 complex, complex III, CIII) and cytochrome c oxidase (complex IV, CIV), that cooperate to transfer electrons derived from NADH and succinate to molecular oxygen, creating an electrochemical gradient over the inner membrane that drives transmembrane transport and the ATP synthase. Cytochrome c oxidase is the component of the respiratory chain that catalyzes the reduction of oxygen to water. Electrons originating from reduced cytochrome c in the intermembrane space (IMS) are transferred via the dinuclear copper A center (CU(A)) of subunit 2 and heme A of subunit 1 to the active site in subunit 1, a binuclear center (BNC) formed by heme A3 and copper B (CU(B)). The BNC reduces molecular oxygen to 2 water molecules using 4 electrons from cytochrome c in the IMS and 4 protons from the mitochondrial matrix. In Thunnus obesus (Bigeye tuna), this protein is Cytochrome c oxidase subunit 8B, mitochondrial.